The sequence spans 524 residues: 2-isopropylmalate synthase (524 aa).

Residues 12-274 (VIIFDTTLRD…WNRIESKMLT (263 aa)) form the Pyruvate carboxyltransferase domain. Positions 21, 209, 211, and 245 each coordinate Mn(2+). Positions 398-524 (RLKSLTVIAG…QDAPAVAVAG (127 aa)) are regulatory domain.

Belongs to the alpha-IPM synthase/homocitrate synthase family. LeuA type 1 subfamily. In terms of assembly, homodimer. Mn(2+) is required as a cofactor.

The protein resides in the cytoplasm. It catalyses the reaction 3-methyl-2-oxobutanoate + acetyl-CoA + H2O = (2S)-2-isopropylmalate + CoA + H(+). It functions in the pathway amino-acid biosynthesis; L-leucine biosynthesis; L-leucine from 3-methyl-2-oxobutanoate: step 1/4. In terms of biological role, catalyzes the condensation of the acetyl group of acetyl-CoA with 3-methyl-2-oxobutanoate (2-ketoisovalerate) to form 3-carboxy-3-hydroxy-4-methylpentanoate (2-isopropylmalate). This is 2-isopropylmalate synthase from Rhodopseudomonas palustris (strain BisB5).